A 300-amino-acid chain; its full sequence is uncharacterized protein (300 aa).

An N-terminal signal peptide occupies residues 1 to 20 (MRLLISCILILSILVNFISG). At 21–279 (HAVLVAPTPF…PCSIYGDGNG (259 aa)) the chain is on the extracellular side. N-linked (GlcNAc...) asparagine glycans are attached at residues N56, N217, and N278. Residues 280–300 (SNLIIIPTLLIISILSLILMF) traverse the membrane as a helical segment.

The protein localises to the membrane. This is an uncharacterized protein from Dictyostelium discoideum (Social amoeba).